A 222-amino-acid chain; its full sequence is ATP-dependent Clp protease proteolytic subunit (222 aa).

Residue Ser125 is the Nucleophile of the active site. His150 is a catalytic residue.

Belongs to the peptidase S14 family. Fourteen ClpP subunits assemble into 2 heptameric rings which stack back to back to give a disk-like structure with a central cavity, resembling the structure of eukaryotic proteasomes.

Its subcellular location is the cytoplasm. The catalysed reaction is Hydrolysis of proteins to small peptides in the presence of ATP and magnesium. alpha-casein is the usual test substrate. In the absence of ATP, only oligopeptides shorter than five residues are hydrolyzed (such as succinyl-Leu-Tyr-|-NHMec, and Leu-Tyr-Leu-|-Tyr-Trp, in which cleavage of the -Tyr-|-Leu- and -Tyr-|-Trp bonds also occurs).. Cleaves peptides in various proteins in a process that requires ATP hydrolysis. Has a chymotrypsin-like activity. Plays a major role in the degradation of misfolded proteins. The protein is ATP-dependent Clp protease proteolytic subunit of Porphyromonas gingivalis (strain ATCC BAA-308 / W83).